The following is a 369-amino-acid chain: Methylthioribose-1-phosphate isomerase (369 aa).

Residues 54 to 56 (RGA), Arg95, and Gln208 contribute to the substrate site. Asp249 (proton donor) is an active-site residue. 259–260 (NK) contacts substrate.

It belongs to the eIF-2B alpha/beta/delta subunits family. MtnA subfamily.

The enzyme catalyses 5-(methylsulfanyl)-alpha-D-ribose 1-phosphate = 5-(methylsulfanyl)-D-ribulose 1-phosphate. The protein operates within amino-acid biosynthesis; L-methionine biosynthesis via salvage pathway; L-methionine from S-methyl-5-thio-alpha-D-ribose 1-phosphate: step 1/6. Catalyzes the interconversion of methylthioribose-1-phosphate (MTR-1-P) into methylthioribulose-1-phosphate (MTRu-1-P). This chain is Methylthioribose-1-phosphate isomerase, found in Desulfatibacillum aliphaticivorans.